The following is a 515-amino-acid chain: Interferon alpha/beta receptor 2 (515 aa).

The first 26 residues, 1-26, serve as a signal peptide directing secretion; the sequence is MLLSQNAFIFRSLNLVLMVYISLVFG. Residues 27 to 243 lie on the Extracellular side of the membrane; the sequence is ISYDSPDYTD…QESESAESAK (217 aa). 2 disulfide bridges follow: C39-C122 and C85-C93. Residues N58, N87, N116, N188, and N192 are each glycosylated (N-linked (GlcNAc...) asparagine). Residues C207 and C227 are joined by a disulfide bond. Residues 244–264 traverse the membrane as a helical segment; that stretch reads IGGIITVFLIALVLTSTIVTL. Residues 265–515 lie on the Cytoplasmic side of the membrane; that stretch reads KWIGYICLRN…VDLGDGYIMR (251 aa). Disordered stretches follow at residues 318–418 and 455–515; these read YDDE…EGSG and EMVD…YIMR. Y337 is subject to Phosphotyrosine. Positions 362 to 375 are enriched in acidic residues; the sequence is PESEEEPDLPEVDV. The residue at position 400 (S400) is a Phosphoserine. Residues 418-444 form a mediates interaction with STAT2 (and required for the recruitment of USP18) region; that stretch reads GGRITFNVDLNSVFLRVLDDEDSDDLE. Residues 464 to 488 show a composition bias toward polar residues; that stretch reads NVQSNHLLASGEGTQPTFPSPSSEG. The residue at position 467 (S467) is a Phosphoserine. Phosphotyrosine is present on Y512.

The protein belongs to the type II cytokine receptor family. Heterodimer with IFNAR1; forming the receptor for type I interferon. Interacts with JAK1. Interacts with the transcriptional factors STAT1 and STAT2. Interacts with USP18; indirectly via STAT2, it negatively regulates the assembly of the ternary interferon-IFNAR1-IFNAR2 complex and therefore type I interferon signaling. In terms of processing, phosphorylated on tyrosine residues upon interferon binding. Phosphorylation at Tyr-337 or Tyr-512 are sufficient to mediate interferon dependent activation of STAT1, STAT2 and STAT3 leading to antiproliferative effects on many different cell types. Post-translationally, glycosylated. Isoform 3 is detected in the urine (at protein level). Expressed in blood cells. Expressed in lymphoblastoid and fibrosarcoma cell lines.

It is found in the cell membrane. The protein localises to the secreted. Its function is as follows. Together with IFNAR1, forms the heterodimeric receptor for type I interferons (including interferons alpha, beta, epsilon, omega and kappa). Type I interferon binding activates the JAK-STAT signaling cascade, resulting in transcriptional activation or repression of interferon-regulated genes that encode the effectors of the interferon response. Mechanistically, type I interferon-binding brings the IFNAR1 and IFNAR2 subunits into close proximity with one another, driving their associated Janus kinases (JAKs) (TYK2 bound to IFNAR1 and JAK1 bound to IFNAR2) to cross-phosphorylate one another. The activated kinases phosphorylate specific tyrosine residues on the intracellular domains of IFNAR1 and IFNAR2, forming docking sites for the STAT transcription factors (STAT1, STAT2 and STAT). STAT proteins are then phosphorylated by the JAKs, promoting their translocation into the nucleus to regulate expression of interferon-regulated genes. Potent inhibitor of type I IFN receptor activity. The protein is Interferon alpha/beta receptor 2 (IFNAR2) of Homo sapiens (Human).